A 328-amino-acid chain; its full sequence is DNA polymerase III subunit delta' (328 aa).

As to quaternary structure, DNA polymerase III contains a core (composed of alpha, epsilon and theta chains) that associates with a tau subunit. This core dimerizes to form the POLIII' complex. PolIII' associates with the gamma complex (composed of gamma, delta, delta', psi and chi chains) and with the beta chain to form the complete DNA polymerase III complex.

It carries out the reaction DNA(n) + a 2'-deoxyribonucleoside 5'-triphosphate = DNA(n+1) + diphosphate. DNA polymerase III is a complex, multichain enzyme responsible for most of the replicative synthesis in bacteria. This DNA polymerase also exhibits 3' to 5' exonuclease activity. This is DNA polymerase III subunit delta' (holB) from Pseudomonas aeruginosa (strain ATCC 15692 / DSM 22644 / CIP 104116 / JCM 14847 / LMG 12228 / 1C / PRS 101 / PAO1).